Consider the following 430-residue polypeptide: Tyrosine--tRNA ligase (430 aa).

Y32 provides a ligand contact to L-tyrosine. The 'HIGH' region motif lies at 37–46 (PTADSLHIGH). L-tyrosine-binding residues include Y172 and Q176. Positions 232-236 (KFGKT) match the 'KMSKS' region motif. An ATP-binding site is contributed by K235. Residues 362 to 429 (IKAVDLCTEK…GKKNYYLLIA (68 aa)) enclose the S4 RNA-binding domain.

It belongs to the class-I aminoacyl-tRNA synthetase family. TyrS type 1 subfamily. Homodimer.

It is found in the cytoplasm. It carries out the reaction tRNA(Tyr) + L-tyrosine + ATP = L-tyrosyl-tRNA(Tyr) + AMP + diphosphate + H(+). Catalyzes the attachment of tyrosine to tRNA(Tyr) in a two-step reaction: tyrosine is first activated by ATP to form Tyr-AMP and then transferred to the acceptor end of tRNA(Tyr). The protein is Tyrosine--tRNA ligase of Parabacteroides distasonis (strain ATCC 8503 / DSM 20701 / CIP 104284 / JCM 5825 / NCTC 11152).